A 104-amino-acid chain; its full sequence is L-rhamnose mutarotase (104 aa).

Tyrosine 18 is a substrate binding site. Residue histidine 22 is the Proton donor of the active site. Substrate is bound by residues tyrosine 41 and 76 to 77; that span reads WW.

Belongs to the rhamnose mutarotase family. In terms of assembly, homodimer.

Its subcellular location is the cytoplasm. It carries out the reaction alpha-L-rhamnose = beta-L-rhamnose. It functions in the pathway carbohydrate metabolism; L-rhamnose metabolism. In terms of biological role, involved in the anomeric conversion of L-rhamnose. The polypeptide is L-rhamnose mutarotase (Citrobacter koseri (strain ATCC BAA-895 / CDC 4225-83 / SGSC4696)).